A 398-amino-acid chain; its full sequence is 2-amino-3-ketobutyrate coenzyme A ligase (398 aa).

Position 111 to 112 (111 to 112 (CF)) interacts with pyridoxal 5'-phosphate. H136 contributes to the substrate binding site. Residues S185, 210–213 (DDSH), 241–244 (TLGK), and 274–275 (SN) contribute to the pyridoxal 5'-phosphate site. K244 is subject to N6-(pyridoxal phosphate)lysine. R368 contributes to the substrate binding site.

Belongs to the class-II pyridoxal-phosphate-dependent aminotransferase family. Homodimer. Requires pyridoxal 5'-phosphate as cofactor.

The catalysed reaction is glycine + acetyl-CoA = (2S)-2-amino-3-oxobutanoate + CoA. The protein operates within amino-acid degradation; L-threonine degradation via oxydo-reductase pathway; glycine from L-threonine: step 2/2. Its function is as follows. Catalyzes the cleavage of 2-amino-3-ketobutyrate to glycine and acetyl-CoA. This is 2-amino-3-ketobutyrate coenzyme A ligase from Salmonella typhimurium (strain LT2 / SGSC1412 / ATCC 700720).